The primary structure comprises 82 residues: UPF0337 protein PP_2059 (82 aa).

The protein belongs to the UPF0337 (CsbD) family.

This is UPF0337 protein PP_2059 from Pseudomonas putida (strain ATCC 47054 / DSM 6125 / CFBP 8728 / NCIMB 11950 / KT2440).